Reading from the N-terminus, the 427-residue chain is Glutamate-1-semialdehyde 2,1-aminomutase (427 aa).

K265 carries the post-translational modification N6-(pyridoxal phosphate)lysine.

This sequence belongs to the class-III pyridoxal-phosphate-dependent aminotransferase family. HemL subfamily. In terms of assembly, homodimer. It depends on pyridoxal 5'-phosphate as a cofactor.

It localises to the cytoplasm. It carries out the reaction (S)-4-amino-5-oxopentanoate = 5-aminolevulinate. It functions in the pathway porphyrin-containing compound metabolism; protoporphyrin-IX biosynthesis; 5-aminolevulinate from L-glutamyl-tRNA(Glu): step 2/2. The chain is Glutamate-1-semialdehyde 2,1-aminomutase from Neisseria meningitidis serogroup C (strain 053442).